A 207-amino-acid chain; its full sequence is Cytochrome c biogenesis ATP-binding export protein CcmA (207 aa).

The region spanning 4-207 (LEVRELLCER…RISLTQTRAV (204 aa)) is the ABC transporter domain. 36-43 (GSNGAGKT) contacts ATP.

It belongs to the ABC transporter superfamily. CcmA exporter (TC 3.A.1.107) family. The complex is composed of two ATP-binding proteins (CcmA) and two transmembrane proteins (CcmB).

It is found in the cell inner membrane. The catalysed reaction is heme b(in) + ATP + H2O = heme b(out) + ADP + phosphate + H(+). Its function is as follows. Part of the ABC transporter complex CcmAB involved in the biogenesis of c-type cytochromes; once thought to export heme, this seems not to be the case, but its exact role is uncertain. Responsible for energy coupling to the transport system. The protein is Cytochrome c biogenesis ATP-binding export protein CcmA of Shigella dysenteriae serotype 1 (strain Sd197).